We begin with the raw amino-acid sequence, 144 residues long: Large ribosomal subunit protein uL16 (144 aa).

A compositionally biased stretch (basic residues) spans 1 to 14 (MLMPKRVKYRKPHR). Residues 1–25 (MLMPKRVKYRKPHRPGTQGKATRGN) are disordered.

This sequence belongs to the universal ribosomal protein uL16 family. In terms of assembly, part of the 50S ribosomal subunit.

Binds 23S rRNA and is also seen to make contacts with the A and possibly P site tRNAs. This is Large ribosomal subunit protein uL16 from Moorella thermoacetica (strain ATCC 39073 / JCM 9320).